The primary structure comprises 126 residues: Basic phospholipase A2 1 (126 aa).

A propeptide spanning residues 1–7 (SNRPMPL) is cleaved from the precursor. 7 disulfides stabilise this stretch: C18-C78, C33-C125, C35-C51, C50-C106, C57-C99, C67-C92, and C85-C97. The Ca(2+) site is built by Y34, G36, and G38. The active site involves H54. D55 is a Ca(2+) binding site. The active site involves D100.

Belongs to the phospholipase A2 family. Group I subfamily. D49 sub-subfamily. In terms of assembly, heterodimer formed between two homologous isoforms: isoform 1 and isoform 2. It depends on Ca(2+) as a cofactor. In terms of tissue distribution, expressed by the venom gland.

The protein localises to the secreted. The enzyme catalyses a 1,2-diacyl-sn-glycero-3-phosphocholine + H2O = a 1-acyl-sn-glycero-3-phosphocholine + a fatty acid + H(+). PLA2 catalyzes the calcium-dependent hydrolysis of the 2-acyl groups in 3-sn-phosphoglycerides. In Naja sagittifera (Andaman cobra), this protein is Basic phospholipase A2 1.